A 548-amino-acid polypeptide reads, in one-letter code: Chaperonin GroEL (548 aa).

Residues T30 to P33, K51, D87 to T91, G415, and D495 each bind ATP.

It belongs to the chaperonin (HSP60) family. In terms of assembly, forms a cylinder of 14 subunits composed of two heptameric rings stacked back-to-back. Interacts with the co-chaperonin GroES.

The protein localises to the cytoplasm. It carries out the reaction ATP + H2O + a folded polypeptide = ADP + phosphate + an unfolded polypeptide.. In terms of biological role, together with its co-chaperonin GroES, plays an essential role in assisting protein folding. The GroEL-GroES system forms a nano-cage that allows encapsulation of the non-native substrate proteins and provides a physical environment optimized to promote and accelerate protein folding. The chain is Chaperonin GroEL from Colwellia psychrerythraea (strain 34H / ATCC BAA-681) (Vibrio psychroerythus).